Consider the following 483-residue polypeptide: MLTLDTLNVMLAVSEEGLIEEMIIALLASPQLAVFFEKFPRLKAAITDDVPRWREALRSRLKDARVPPELTEEVMCYQQSQLLSTPQFIVQLPQILDLLHRLNSPWAEQARQLVDANSTITSALHTLFLQRWRLSLIVQATTLNQQLLEEEREQLLSEVQERMTLSGQLEPILADNNTAAGRLWDMSAGQLKRGDYQFIVKYGEFLNEQPELKRLAEQLGRSREAKSIPRNDAQMETFRTMVREPATVPEQVDGLQQSDDILRLLPPELATLGITELEYEFYRRLVEKQLLTYRLHGESWREKVLERPVVHKDYDEQPRGPFIVCVDTSGSMGGFNEQCAKAFCLALMRIALAENRRCYIMLFSTEIVRYELSGPQGIEQAIRFLSQQFRGGTDLASCFRAIMERLQSREWFDADAVVISDFIAQRLPDDVTSKVKELQRVHQHRFHAVAMSAHGKPGIMRIFDHIWRFDTGMRSRLLRRWRR.

Belongs to the ViaA family. As to quaternary structure, homodimer. Interacts with RavA.

The protein resides in the cytoplasm. Functionally, component of the RavA-ViaA chaperone complex, which may act on the membrane to optimize the function of some of the respiratory chains. ViaA stimulates the ATPase activity of RavA. The polypeptide is Regulatory protein ViaA (Shigella flexneri serotype 5b (strain 8401)).